We begin with the raw amino-acid sequence, 74 residues long: uncharacterized protein (74 aa).

To U.parvum UU416.

This is an uncharacterized protein from Mycoplasma pneumoniae (strain ATCC 29342 / M129 / Subtype 1) (Mycoplasmoides pneumoniae).